The primary structure comprises 715 residues: Fatty acid oxidation complex subunit alpha (715 aa).

Positions 1–190 (MIYQGKAITV…KVGAVDAVVA (190 aa)) are enoyl-CoA hydratase/isomerase. Residue Asp297 coordinates substrate. The interval 312–715 (HDAKQAAVLG…MAKNGQRFFN (404 aa)) is 3-hydroxyacyl-CoA dehydrogenase. NAD(+) is bound by residues Met325, Asp344, 401–403 (VVE), Lys408, and Ser430. The active-site For 3-hydroxyacyl-CoA dehydrogenase activity is the His451. NAD(+) is bound at residue Asn454. Substrate contacts are provided by Asn501 and Tyr660.

The protein in the N-terminal section; belongs to the enoyl-CoA hydratase/isomerase family. It in the C-terminal section; belongs to the 3-hydroxyacyl-CoA dehydrogenase family. Heterotetramer of two alpha chains (FadB) and two beta chains (FadA).

The enzyme catalyses a (3S)-3-hydroxyacyl-CoA + NAD(+) = a 3-oxoacyl-CoA + NADH + H(+). It catalyses the reaction a (3S)-3-hydroxyacyl-CoA = a (2E)-enoyl-CoA + H2O. It carries out the reaction a 4-saturated-(3S)-3-hydroxyacyl-CoA = a (3E)-enoyl-CoA + H2O. The catalysed reaction is (3S)-3-hydroxybutanoyl-CoA = (3R)-3-hydroxybutanoyl-CoA. The enzyme catalyses a (3Z)-enoyl-CoA = a 4-saturated (2E)-enoyl-CoA. It catalyses the reaction a (3E)-enoyl-CoA = a 4-saturated (2E)-enoyl-CoA. It functions in the pathway lipid metabolism; fatty acid beta-oxidation. Functionally, involved in the aerobic and anaerobic degradation of long-chain fatty acids via beta-oxidation cycle. Catalyzes the formation of 3-oxoacyl-CoA from enoyl-CoA via L-3-hydroxyacyl-CoA. It can also use D-3-hydroxyacyl-CoA and cis-3-enoyl-CoA as substrate. In Ectopseudomonas oleovorans (Pseudomonas oleovorans), this protein is Fatty acid oxidation complex subunit alpha.